The following is a 379-amino-acid chain: MSADKVTLADLPLRDNLRGKSPYGAPQLQVPVRLNTNENPHPPSKALVDDVAASVREAAAELHRYPDRDAVALRTDLAAYLTAATGVRLGVENLWAANGSNEILQQLLQAFGGPGRTAIGFVPSYSMHPIISDGTQTEWLQASRAEDFGLDIDVAVSAVTERKPDVVFVTSPNNPSGQSVPLDDLRRVLDAMQGGILIVDEAYGEFSSQPSAVALLDDYPAKLVVSRTMSKAFAFAGGRLGYLAAAPAVIDALLLVRLPYHLSVLTQAAARAALRHADDTLGSVKALIAERERVSAELTRMGYRVIPSDANFVLFGAFTDAPATWQRYLDAGVLIRDVGIPGHLRVTIGLAAENDAFLAAGAELAGTELQPSTSPVGAQ.

Lys-231 is subject to N6-(pyridoxal phosphate)lysine.

It belongs to the class-II pyridoxal-phosphate-dependent aminotransferase family. Histidinol-phosphate aminotransferase subfamily. Homodimer. Pyridoxal 5'-phosphate serves as cofactor.

It carries out the reaction L-histidinol phosphate + 2-oxoglutarate = 3-(imidazol-4-yl)-2-oxopropyl phosphate + L-glutamate. Its pathway is amino-acid biosynthesis; L-histidine biosynthesis; L-histidine from 5-phospho-alpha-D-ribose 1-diphosphate: step 7/9. The protein is Histidinol-phosphate aminotransferase of Mycolicibacterium smegmatis (strain ATCC 700084 / mc(2)155) (Mycobacterium smegmatis).